The sequence spans 400 residues: NADH-ubiquinone oxidoreductase 49 kDa subunit (400 aa).

This sequence belongs to the complex I 49 kDa subunit family.

It is found in the mitochondrion. It carries out the reaction a ubiquinone + NADH + 5 H(+)(in) = a ubiquinol + NAD(+) + 4 H(+)(out). Functionally, core subunit of the mitochondrial membrane respiratory chain NADH dehydrogenase (Complex I) that is believed to belong to the minimal assembly required for catalysis. Complex I functions in the transfer of electrons from NADH to the respiratory chain. The immediate electron acceptor for the enzyme is believed to be ubiquinone. Component of the iron-sulfur (IP) fragment of the enzyme. Component of the iron-sulfur (IP) fragment of the enzyme. In Prototheca wickerhamii, this protein is NADH-ubiquinone oxidoreductase 49 kDa subunit (NAD7).